The primary structure comprises 105 residues: Host transcription reprogramming factor 7 (105 aa).

The N-terminal stretch at methionine 1–alanine 19 is a signal peptide. The C2H2-type zinc finger occupies tyrosine 69–histidine 95.

The protein localises to the secreted. It is found in the host nucleus. Its function is as follows. Probable secreted effector that translocates into the nuclei of host cells to reprogram the expression of targeted genes by binding on effector binding elements in rice. The sequence is that of Host transcription reprogramming factor 7 from Pyricularia oryzae (strain 70-15 / ATCC MYA-4617 / FGSC 8958) (Rice blast fungus).